A 61-amino-acid chain; its full sequence is Metallothionein-1C (61 aa).

A beta region spans residues 1 to 29; the sequence is MDPNCSCSTGSSCSCAGSCTCKACRCPSC. Cysteine 5, cysteine 7, cysteine 13, cysteine 15, cysteine 19, cysteine 21, cysteine 24, cysteine 26, cysteine 29, cysteine 33, cysteine 34, cysteine 36, cysteine 37, cysteine 41, cysteine 44, cysteine 48, cysteine 50, cysteine 57, cysteine 59, and cysteine 60 together coordinate a divalent metal cation. The segment at 30 to 61 is alpha; it reads KKSCCSCCPVGCAKCAQGCICKGASDKCSCCA.

The protein belongs to the metallothionein superfamily. Type 1 family.

Functionally, metallothioneins have a high content of cysteine residues that bind various heavy metals; these proteins are transcriptionally regulated by both heavy metals and glucocorticoids. In Ovis aries (Sheep), this protein is Metallothionein-1C (MT1C).